Reading from the N-terminus, the 434-residue chain is Probable phosphatidylinositol 3,4,5-trisphosphate 3-phosphatase TEP1 (434 aa).

A Phosphatase tensin-type domain is found at 33–255 (KTKNDIGLRL…RYHEFFITHE (223 aa)). The active-site Phosphocysteine intermediate is the C193.

The enzyme catalyses a 1,2-diacyl-sn-glycero-3-phospho-(1D-myo-inositol-3,4,5-trisphosphate) + H2O = a 1,2-diacyl-sn-glycero-3-phospho-(1D-myo-inositol-4,5-bisphosphate) + phosphate. May act as a phosphoinositide 3-phosphatase by regulating PtdIns(3,4,5)P3 levels. In Saccharomyces cerevisiae (strain ATCC 204508 / S288c) (Baker's yeast), this protein is Probable phosphatidylinositol 3,4,5-trisphosphate 3-phosphatase TEP1 (TEP1).